Consider the following 183-residue polypeptide: Ribosome-recycling factor (183 aa).

It belongs to the RRF family.

The protein localises to the cytoplasm. In terms of biological role, responsible for the release of ribosomes from messenger RNA at the termination of protein biosynthesis. May increase the efficiency of translation by recycling ribosomes from one round of translation to another. This is Ribosome-recycling factor from Mycoplasmoides gallisepticum (strain R(low / passage 15 / clone 2)) (Mycoplasma gallisepticum).